Reading from the N-terminus, the 187-residue chain is Ribose 1,5-bisphosphate phosphokinase PhnN (187 aa).

10 to 17 (GPSGSGKD) is a binding site for ATP.

The protein belongs to the ribose 1,5-bisphosphokinase family.

The catalysed reaction is alpha-D-ribose 1,5-bisphosphate + ATP = 5-phospho-alpha-D-ribose 1-diphosphate + ADP. Its pathway is metabolic intermediate biosynthesis; 5-phospho-alpha-D-ribose 1-diphosphate biosynthesis; 5-phospho-alpha-D-ribose 1-diphosphate from D-ribose 5-phosphate (route II): step 3/3. Functionally, catalyzes the phosphorylation of ribose 1,5-bisphosphate to 5-phospho-D-ribosyl alpha-1-diphosphate (PRPP). This is Ribose 1,5-bisphosphate phosphokinase PhnN from Klebsiella pneumoniae subsp. pneumoniae (strain ATCC 700721 / MGH 78578).